Consider the following 239-residue polypeptide: MPYQLENRPPDLRESMYFPEIIRGIGTITKHFLKNLFFSRDANPDILARKRGGFGHSDNVTLQYPEERAPYAPAYRGLHRLVPREDGKPRCVACYMCATICPAQCIYIEAAEYPDDPVEKYPAKFVIDELRCIVCGFCVEACPKDAIRMDSGEHTPPSYERSAQIWDEKRLLRGPPVSYQYDPWLRRGSPSIPPDKLEEMRARAKPFPTVATDEASQTPGFSVRALAAEAKDRAQAARK.

4Fe-4S ferredoxin-type domains follow at residues 81-111 (LVPREDGKPRCVACYMCATICPAQCIYIEAA) and 123-152 (AKFVIDELRCIVCGFCVEACPKDAIRMDSG). [4Fe-4S] cluster-binding residues include Cys-91, Cys-94, Cys-97, Cys-101, Cys-132, Cys-135, Cys-138, and Cys-142.

This sequence belongs to the complex I 23 kDa subunit family. NDH-1 is composed of 14 different subunits. Subunits NuoA, H, J, K, L, M, N constitute the membrane sector of the complex. [4Fe-4S] cluster is required as a cofactor.

It localises to the cell inner membrane. It catalyses the reaction a quinone + NADH + 5 H(+)(in) = a quinol + NAD(+) + 4 H(+)(out). NDH-1 shuttles electrons from NADH, via FMN and iron-sulfur (Fe-S) centers, to quinones in the respiratory chain. The immediate electron acceptor for the enzyme in this species is believed to be ubiquinone. Couples the redox reaction to proton translocation (for every two electrons transferred, four hydrogen ions are translocated across the cytoplasmic membrane), and thus conserves the redox energy in a proton gradient. The protein is NADH-quinone oxidoreductase subunit I 1 of Anaeromyxobacter dehalogenans (strain 2CP-C).